The primary structure comprises 402 residues: Acetylornithine aminotransferase (402 aa).

Pyridoxal 5'-phosphate is bound by residues 106 to 107 (GA) and phenylalanine 132. Arginine 135 is a N(2)-acetyl-L-ornithine binding site. 217–220 (DEVQ) contributes to the pyridoxal 5'-phosphate binding site. Position 247 is an N6-(pyridoxal phosphate)lysine (lysine 247). Threonine 275 is a N(2)-acetyl-L-ornithine binding site. Residue threonine 276 participates in pyridoxal 5'-phosphate binding.

This sequence belongs to the class-III pyridoxal-phosphate-dependent aminotransferase family. ArgD subfamily. In terms of assembly, homodimer. Requires pyridoxal 5'-phosphate as cofactor.

It is found in the cytoplasm. It catalyses the reaction N(2)-acetyl-L-ornithine + 2-oxoglutarate = N-acetyl-L-glutamate 5-semialdehyde + L-glutamate. It participates in amino-acid biosynthesis; L-arginine biosynthesis; N(2)-acetyl-L-ornithine from L-glutamate: step 4/4. This chain is Acetylornithine aminotransferase, found in Streptomyces coelicolor (strain ATCC BAA-471 / A3(2) / M145).